Consider the following 432-residue polypeptide: Glutamyl-tRNA reductase (432 aa).

Substrate contacts are provided by residues 55–58 (TCNR), serine 114, 119–121 (ETQ), and glutamine 125. Catalysis depends on cysteine 56, which acts as the Nucleophile. 194-199 (GAGEMI) is a binding site for NADP(+).

Belongs to the glutamyl-tRNA reductase family. As to quaternary structure, homodimer.

The catalysed reaction is (S)-4-amino-5-oxopentanoate + tRNA(Glu) + NADP(+) = L-glutamyl-tRNA(Glu) + NADPH + H(+). It functions in the pathway porphyrin-containing compound metabolism; protoporphyrin-IX biosynthesis; 5-aminolevulinate from L-glutamyl-tRNA(Glu): step 1/2. In terms of biological role, catalyzes the NADPH-dependent reduction of glutamyl-tRNA(Glu) to glutamate 1-semialdehyde (GSA). The protein is Glutamyl-tRNA reductase of Burkholderia thailandensis (strain ATCC 700388 / DSM 13276 / CCUG 48851 / CIP 106301 / E264).